Reading from the N-terminus, the 114-residue chain is Putative antiporter subunit mnhC2 (114 aa).

The next 3 membrane-spanning stretches (helical) occupy residues 3 to 23, 28 to 48, and 72 to 92; these read LILL…ILSI, IVIG…SMGT, and AIVL…LVLV.

The protein belongs to the CPA3 antiporters (TC 2.A.63) subunit C family. In terms of assembly, may form a heterooligomeric complex that consists of seven subunits: mnhA2, mnhB2, mnhC2, mnhD2, mnhE2, mnhF2 and mnhG2.

Its subcellular location is the cell membrane. The sequence is that of Putative antiporter subunit mnhC2 (mnhC2) from Staphylococcus aureus (strain MRSA252).